Reading from the N-terminus, the 276-residue chain is Putative aliphatic sulfonates transport permease protein SsuC (276 aa).

The next 7 membrane-spanning stretches (helical) occupy residues 32–52 (GLLL…LGVV), 54–74 (ATVL…ILSG), 87–107 (AALG…LAGF), 119–141 (LQML…FGFD), 146–168 (ILLI…IRGV), 199–219 (ILLG…VAEL), and 242–262 (VFAG…FVRL). Positions 80–260 (LQISIYRAAL…VVGKLTDSFV (181 aa)) constitute an ABC transmembrane type-1 domain.

It belongs to the binding-protein-dependent transport system permease family. CysTW subfamily.

The protein resides in the cell membrane. Its function is as follows. Part of a binding-protein-dependent transport system for aliphatic sulfonates. Probably responsible for the translocation of the substrate across the membrane. This Bacillus subtilis (strain 168) protein is Putative aliphatic sulfonates transport permease protein SsuC (ssuC).